We begin with the raw amino-acid sequence, 180 residues long: NADH-quinone oxidoreductase subunit I (180 aa).

4Fe-4S ferredoxin-type domains lie at 48 to 80 (IVLT…LQKA) and 90 to 119 (EFFR…LTPD). 8 residues coordinate [4Fe-4S] cluster: Cys60, Cys63, Cys66, Cys70, Cys99, Cys102, Cys105, and Cys109. Residues 161–174 (KPKGDAEHEAKPID) show a composition bias toward basic and acidic residues. Residues 161 to 180 (KPKGDAEHEAKPIDVKSLLP) form a disordered region.

Belongs to the complex I 23 kDa subunit family. In terms of assembly, NDH-1 is composed of 14 different subunits. Subunits NuoA, H, J, K, L, M, N constitute the membrane sector of the complex. It depends on [4Fe-4S] cluster as a cofactor.

It is found in the cell inner membrane. The catalysed reaction is a quinone + NADH + 5 H(+)(in) = a quinol + NAD(+) + 4 H(+)(out). In terms of biological role, NDH-1 shuttles electrons from NADH, via FMN and iron-sulfur (Fe-S) centers, to quinones in the respiratory chain. The immediate electron acceptor for the enzyme in this species is believed to be ubiquinone. Couples the redox reaction to proton translocation (for every two electrons transferred, four hydrogen ions are translocated across the cytoplasmic membrane), and thus conserves the redox energy in a proton gradient. The protein is NADH-quinone oxidoreductase subunit I of Aeromonas salmonicida (strain A449).